A 182-amino-acid chain; its full sequence is Probable chorismate pyruvate-lyase (182 aa).

Positions 81, 119, and 171 each coordinate substrate.

This sequence belongs to the UbiC family.

It is found in the cytoplasm. It catalyses the reaction chorismate = 4-hydroxybenzoate + pyruvate. It functions in the pathway cofactor biosynthesis; ubiquinone biosynthesis. In terms of biological role, removes the pyruvyl group from chorismate, with concomitant aromatization of the ring, to provide 4-hydroxybenzoate (4HB) for the ubiquinone pathway. The chain is Probable chorismate pyruvate-lyase from Pseudomonas putida (Arthrobacter siderocapsulatus).